We begin with the raw amino-acid sequence, 203 residues long: MRFVLPKGRLLKPSIEFLRKAGVELELPNGRELVSADGRVLLARAFDVPVYVEHGVEVGIAGSDVVLERGSDVFIPLELPFGKCRISVAVPGERKRYPEDMDCFRIATKYPRIASSYFDSIGVDVEVMKLHGSVELSVRTGIADAIVDIVETGQTLRENGLVEVAKVMDVSALLLVNRIAQKVLFDEINELVMKLRGVLDEGA.

Belongs to the ATP phosphoribosyltransferase family. Short subfamily.

The protein resides in the cytoplasm. It carries out the reaction 1-(5-phospho-beta-D-ribosyl)-ATP + diphosphate = 5-phospho-alpha-D-ribose 1-diphosphate + ATP. Its pathway is amino-acid biosynthesis; L-histidine biosynthesis; L-histidine from 5-phospho-alpha-D-ribose 1-diphosphate: step 1/9. In terms of biological role, catalyzes the condensation of ATP and 5-phosphoribose 1-diphosphate to form N'-(5'-phosphoribosyl)-ATP (PR-ATP). Has a crucial role in the pathway because the rate of histidine biosynthesis seems to be controlled primarily by regulation of HisG enzymatic activity. The polypeptide is ATP phosphoribosyltransferase (Thermococcus kodakarensis (strain ATCC BAA-918 / JCM 12380 / KOD1) (Pyrococcus kodakaraensis (strain KOD1))).